We begin with the raw amino-acid sequence, 346 residues long: Holliday junction branch migration complex subunit RuvB (346 aa).

Residues 1 to 11 (MTEQRTIASSA) are compositionally biased toward polar residues. The segment at 1–20 (MTEQRTIASSATREDEAADA) is disordered. Positions 1–183 (MTEQRTIASS…FGIVQRLEFY (183 aa)) are large ATPase domain (RuvB-L). Residues isoleucine 22, arginine 23, glycine 64, lysine 67, threonine 68, threonine 69, 130-132 (EDF), arginine 173, tyrosine 183, and arginine 220 contribute to the ATP site. Position 68 (threonine 68) interacts with Mg(2+). A small ATPAse domain (RuvB-S) region spans residues 184 to 254 (SPQELTRIVI…VAQAAMQMLK (71 aa)). The head domain (RuvB-H) stretch occupies residues 257–346 (PEGFDELDRR…PAIGEPGDLF (90 aa)). Residues arginine 293, arginine 312, and arginine 317 each coordinate DNA.

The protein belongs to the RuvB family. Homohexamer. Forms an RuvA(8)-RuvB(12)-Holliday junction (HJ) complex. HJ DNA is sandwiched between 2 RuvA tetramers; dsDNA enters through RuvA and exits via RuvB. An RuvB hexamer assembles on each DNA strand where it exits the tetramer. Each RuvB hexamer is contacted by two RuvA subunits (via domain III) on 2 adjacent RuvB subunits; this complex drives branch migration. In the full resolvosome a probable DNA-RuvA(4)-RuvB(12)-RuvC(2) complex forms which resolves the HJ.

The protein resides in the cytoplasm. The catalysed reaction is ATP + H2O = ADP + phosphate + H(+). Its function is as follows. The RuvA-RuvB-RuvC complex processes Holliday junction (HJ) DNA during genetic recombination and DNA repair, while the RuvA-RuvB complex plays an important role in the rescue of blocked DNA replication forks via replication fork reversal (RFR). RuvA specifically binds to HJ cruciform DNA, conferring on it an open structure. The RuvB hexamer acts as an ATP-dependent pump, pulling dsDNA into and through the RuvAB complex. RuvB forms 2 homohexamers on either side of HJ DNA bound by 1 or 2 RuvA tetramers; 4 subunits per hexamer contact DNA at a time. Coordinated motions by a converter formed by DNA-disengaged RuvB subunits stimulates ATP hydrolysis and nucleotide exchange. Immobilization of the converter enables RuvB to convert the ATP-contained energy into a lever motion, pulling 2 nucleotides of DNA out of the RuvA tetramer per ATP hydrolyzed, thus driving DNA branch migration. The RuvB motors rotate together with the DNA substrate, which together with the progressing nucleotide cycle form the mechanistic basis for DNA recombination by continuous HJ branch migration. Branch migration allows RuvC to scan DNA until it finds its consensus sequence, where it cleaves and resolves cruciform DNA. This Xanthomonas campestris pv. campestris (strain B100) protein is Holliday junction branch migration complex subunit RuvB.